Here is a 258-residue protein sequence, read N- to C-terminus: Imidazole glycerol phosphate synthase subunit HisF (258 aa).

Active-site residues include D11 and D130.

Belongs to the HisA/HisF family. In terms of assembly, heterodimer of HisH and HisF.

The protein localises to the cytoplasm. It catalyses the reaction 5-[(5-phospho-1-deoxy-D-ribulos-1-ylimino)methylamino]-1-(5-phospho-beta-D-ribosyl)imidazole-4-carboxamide + L-glutamine = D-erythro-1-(imidazol-4-yl)glycerol 3-phosphate + 5-amino-1-(5-phospho-beta-D-ribosyl)imidazole-4-carboxamide + L-glutamate + H(+). The protein operates within amino-acid biosynthesis; L-histidine biosynthesis; L-histidine from 5-phospho-alpha-D-ribose 1-diphosphate: step 5/9. IGPS catalyzes the conversion of PRFAR and glutamine to IGP, AICAR and glutamate. The HisF subunit catalyzes the cyclization activity that produces IGP and AICAR from PRFAR using the ammonia provided by the HisH subunit. The polypeptide is Imidazole glycerol phosphate synthase subunit HisF (Shigella boydii serotype 4 (strain Sb227)).